A 244-amino-acid chain; its full sequence is 2,3-bisphosphoglycerate-dependent phosphoglycerate mutase (244 aa).

Substrate is bound by residues 8–15, 21–22, Arg-60, 87–90, Lys-98, 114–115, and 181–182; these read RHGESNWN, TG, ERHY, RR, and GN. Residue His-9 is the Tele-phosphohistidine intermediate of the active site. The active-site Proton donor/acceptor is the Glu-87.

This sequence belongs to the phosphoglycerate mutase family. BPG-dependent PGAM subfamily.

The enzyme catalyses (2R)-2-phosphoglycerate = (2R)-3-phosphoglycerate. It participates in carbohydrate degradation; glycolysis; pyruvate from D-glyceraldehyde 3-phosphate: step 3/5. Catalyzes the interconversion of 2-phosphoglycerate and 3-phosphoglycerate. The protein is 2,3-bisphosphoglycerate-dependent phosphoglycerate mutase of Frankia alni (strain DSM 45986 / CECT 9034 / ACN14a).